Consider the following 235-residue polypeptide: Phosphate-specific transport system accessory protein PhoU homolog 2 (235 aa).

This sequence belongs to the PhoU family. As to quaternary structure, homodimer.

It is found in the cytoplasm. Its function is as follows. Plays a role in the regulation of phosphate uptake. This Thermotoga maritima (strain ATCC 43589 / DSM 3109 / JCM 10099 / NBRC 100826 / MSB8) protein is Phosphate-specific transport system accessory protein PhoU homolog 2 (phoU2).